Reading from the N-terminus, the 174-residue chain is Ribosomal RNA large subunit methyltransferase H (174 aa).

Residues leucine 90, glycine 122, and 141–146 contribute to the S-adenosyl-L-methionine site; that span reads LGELTW.

This sequence belongs to the RNA methyltransferase RlmH family. As to quaternary structure, homodimer.

It is found in the cytoplasm. It carries out the reaction pseudouridine(1915) in 23S rRNA + S-adenosyl-L-methionine = N(3)-methylpseudouridine(1915) in 23S rRNA + S-adenosyl-L-homocysteine + H(+). Its function is as follows. Specifically methylates the pseudouridine at position 1915 (m3Psi1915) in 23S rRNA. The protein is Ribosomal RNA large subunit methyltransferase H of Brucella melitensis biotype 2 (strain ATCC 23457).